The sequence spans 156 residues: Ribosomal RNA large subunit methyltransferase H (156 aa).

S-adenosyl-L-methionine contacts are provided by residues Leu73, Gly104, and 123–128; that span reads LSSLTL.

Belongs to the RNA methyltransferase RlmH family. In terms of assembly, homodimer.

It localises to the cytoplasm. It catalyses the reaction pseudouridine(1915) in 23S rRNA + S-adenosyl-L-methionine = N(3)-methylpseudouridine(1915) in 23S rRNA + S-adenosyl-L-homocysteine + H(+). Its function is as follows. Specifically methylates the pseudouridine at position 1915 (m3Psi1915) in 23S rRNA. The polypeptide is Ribosomal RNA large subunit methyltransferase H (Bordetella bronchiseptica (strain ATCC BAA-588 / NCTC 13252 / RB50) (Alcaligenes bronchisepticus)).